The chain runs to 133 residues: ATP synthase epsilon chain, chloroplastic (133 aa).

Belongs to the ATPase epsilon chain family. In terms of assembly, F-type ATPases have 2 components, CF(1) - the catalytic core - and CF(0) - the membrane proton channel. CF(1) has five subunits: alpha(3), beta(3), gamma(1), delta(1), epsilon(1). CF(0) has three main subunits: a, b and c.

It localises to the plastid. The protein resides in the chloroplast thylakoid membrane. Its function is as follows. Produces ATP from ADP in the presence of a proton gradient across the membrane. The polypeptide is ATP synthase epsilon chain, chloroplastic (Thalassiosira pseudonana (Marine diatom)).